The chain runs to 130 residues: Small ribosomal subunit protein eS17 (130 aa).

The segment covering 74 to 84 (QEEERERRDNY) has biased composition (basic and acidic residues). The segment at 74–97 (QEEERERRDNYMPEISTVDPSQLT) is disordered.

Belongs to the eukaryotic ribosomal protein eS17 family.

In Caenorhabditis elegans, this protein is Small ribosomal subunit protein eS17 (rps-17).